Here is a 24-residue protein sequence, read N- to C-terminus: Caerulein precursor fragment BM1 (24 aa).

As to expression, expressed by the skin glands.

The protein resides in the secreted. In terms of biological role, antimicrobial peptide. The sequence is that of Caerulein precursor fragment BM1 from Xenopus boumbaensis (Mawa clawed frog).